A 249-amino-acid chain; its full sequence is Metal-staphylopine import system ATP-binding protein CntF (249 aa).

Positions 2–244 constitute an ABC transporter domain; it reads IKVTDVEKSY…DNAYTRELIE (243 aa). 42–49 provides a ligand contact to ATP; it reads GESGSGKS.

This sequence belongs to the ABC transporter superfamily. As to quaternary structure, the complex is composed of two ATP-binding proteins (CntD and CntF), two transmembrane proteins (CntB and CntC) and a solute-binding protein (CntA).

It localises to the cell membrane. Its function is as follows. Part of the ABC transporter complex CntABCDF (Opp1) involved in the uptake of metal in complex with the metallophore staphylopine (StP). May be involved in the import of a large array of divalent metals ions such as nickel, cobalt, zinc, copper and iron. Probably responsible for energy coupling to the transport system. The sequence is that of Metal-staphylopine import system ATP-binding protein CntF from Staphylococcus aureus (strain Mu50 / ATCC 700699).